Consider the following 255-residue polypeptide: Placenta-expressed transcript 1 protein (255 aa).

The N-terminal stretch at 1–26 is a signal peptide; that stretch reads MPALRTLLPHLGLFLCLALCFSPSFS. N-linked (GlcNAc...) asparagine glycans are attached at residues Asn57, Asn67, and Asn126. Ser236 carries the GPI-anchor amidated serine lipid modification. Positions 237–255 are cleaved as a propeptide — removed in mature form; that stretch reads PLAGALHILLVFLISKLLF.

N-glycosylated. Post-translationally, GPI-anchored.

Its subcellular location is the apical cell membrane. In terms of biological role, modulates leading keratinocyte migration and cellular adhesion to matrix proteins during a wound-healing response and promotes wound repair. May play a role during trichilemmal differentiation of the hair follicle. The chain is Placenta-expressed transcript 1 protein (Plet1) from Rattus norvegicus (Rat).